The following is a 360-amino-acid chain: Chorismate synthase (360 aa).

R48 contributes to the NADP(+) binding site. FMN-binding positions include 125-127 (RSS), 242-243 (NA), G286, 301-305 (KPTSS), and R327.

The protein belongs to the chorismate synthase family. Homotetramer. Requires FMNH2 as cofactor.

It catalyses the reaction 5-O-(1-carboxyvinyl)-3-phosphoshikimate = chorismate + phosphate. The protein operates within metabolic intermediate biosynthesis; chorismate biosynthesis; chorismate from D-erythrose 4-phosphate and phosphoenolpyruvate: step 7/7. In terms of biological role, catalyzes the anti-1,4-elimination of the C-3 phosphate and the C-6 proR hydrogen from 5-enolpyruvylshikimate-3-phosphate (EPSP) to yield chorismate, which is the branch point compound that serves as the starting substrate for the three terminal pathways of aromatic amino acid biosynthesis. This reaction introduces a second double bond into the aromatic ring system. This Pelagibacter ubique (strain HTCC1062) protein is Chorismate synthase.